The primary structure comprises 515 residues: Bifunctional purine biosynthesis protein PurH (515 aa).

In terms of domain architecture, MGS-like spans 1–145 (MTKRALISVS…KNHASVTVVV (145 aa)).

Belongs to the PurH family.

The catalysed reaction is (6R)-10-formyltetrahydrofolate + 5-amino-1-(5-phospho-beta-D-ribosyl)imidazole-4-carboxamide = 5-formamido-1-(5-phospho-D-ribosyl)imidazole-4-carboxamide + (6S)-5,6,7,8-tetrahydrofolate. It carries out the reaction IMP + H2O = 5-formamido-1-(5-phospho-D-ribosyl)imidazole-4-carboxamide. The protein operates within purine metabolism; IMP biosynthesis via de novo pathway; 5-formamido-1-(5-phospho-D-ribosyl)imidazole-4-carboxamide from 5-amino-1-(5-phospho-D-ribosyl)imidazole-4-carboxamide (10-formyl THF route): step 1/1. It participates in purine metabolism; IMP biosynthesis via de novo pathway; IMP from 5-formamido-1-(5-phospho-D-ribosyl)imidazole-4-carboxamide: step 1/1. The protein is Bifunctional purine biosynthesis protein PurH of Streptococcus pyogenes serotype M3 (strain ATCC BAA-595 / MGAS315).